Reading from the N-terminus, the 131-residue chain is Holo-[acyl-carrier-protein] synthase (131 aa).

Aspartate 8 and glutamate 59 together coordinate Mg(2+).

The protein belongs to the P-Pant transferase superfamily. AcpS family. The cofactor is Mg(2+).

Its subcellular location is the cytoplasm. It carries out the reaction apo-[ACP] + CoA = holo-[ACP] + adenosine 3',5'-bisphosphate + H(+). Its function is as follows. Transfers the 4'-phosphopantetheine moiety from coenzyme A to a Ser of acyl-carrier-protein. The chain is Holo-[acyl-carrier-protein] synthase from Rickettsia conorii (strain ATCC VR-613 / Malish 7).